We begin with the raw amino-acid sequence, 236 residues long: Thymidylate kinase (236 aa).

Position 9–16 (glycine 9–serine 16) interacts with ATP.

Belongs to the thymidylate kinase family.

The enzyme catalyses dTMP + ATP = dTDP + ADP. Its function is as follows. Phosphorylation of dTMP to form dTDP in both de novo and salvage pathways of dTTP synthesis. This chain is Thymidylate kinase, found in Herpetosiphon aurantiacus (strain ATCC 23779 / DSM 785 / 114-95).